Consider the following 1014-residue polypeptide: Probable sucrose-phosphate synthase 5 (1014 aa).

Basic and acidic residues-rich tracts occupy residues 29–41 and 49–58; these read RRLEQELGSREAA and EGEKDGKPDT. 2 disordered regions span residues 29 to 108 and 648 to 677; these read RRLE…SDEE and QLLRVPPSPSSSSAAAAAAGGGGAAASSEP.

This sequence belongs to the glycosyltransferase 1 family. As to quaternary structure, homodimer or homotetramer. Expressed in germinating seeds.

It carries out the reaction beta-D-fructose 6-phosphate + UDP-alpha-D-glucose = sucrose 6(F)-phosphate + UDP + H(+). The protein operates within glycan biosynthesis; sucrose biosynthesis; sucrose from D-fructose 6-phosphate and UDP-alpha-D-glucose: step 1/2. Its activity is regulated as follows. Activity is regulated by phosphorylation and moderated by concentration of metabolites and light. In terms of biological role, plays a role in photosynthetic sucrose synthesis by catalyzing the rate-limiting step of sucrose biosynthesis from UDP-glucose and fructose- 6-phosphate. Involved in the regulation of carbon partitioning in the leaves of plants. May regulate the synthesis of sucrose and therefore play a major role as a limiting factor in the export of photoassimilates out of the leaf. Plays a role for sucrose availability that is essential for plant growth and fiber elongation. This Oryza sativa subsp. japonica (Rice) protein is Probable sucrose-phosphate synthase 5 (SPS5).